Consider the following 271-residue polypeptide: Putative phosphoenolpyruvate synthase regulatory protein (271 aa).

152–159 contributes to the ADP binding site; the sequence is GASRSGKT.

This sequence belongs to the pyruvate, phosphate/water dikinase regulatory protein family. PSRP subfamily.

It carries out the reaction [pyruvate, water dikinase] + ADP = [pyruvate, water dikinase]-phosphate + AMP + H(+). It catalyses the reaction [pyruvate, water dikinase]-phosphate + phosphate + H(+) = [pyruvate, water dikinase] + diphosphate. Its function is as follows. Bifunctional serine/threonine kinase and phosphorylase involved in the regulation of the phosphoenolpyruvate synthase (PEPS) by catalyzing its phosphorylation/dephosphorylation. The sequence is that of Putative phosphoenolpyruvate synthase regulatory protein from Marinobacter nauticus (strain ATCC 700491 / DSM 11845 / VT8) (Marinobacter aquaeolei).